The chain runs to 339 residues: Serine/threonine-protein kinase SRK2J (339 aa).

In terms of domain architecture, Protein kinase spans 4–260; sequence YEMVKDLGFG…LKEIKSHAWF (257 aa). ATP-binding positions include 10–18 and Lys33; that span reads LGFGNFGLA. Asp123 acts as the Proton acceptor in catalysis. Residues 308–339 form a disordered region; sequence SRPVESLGSDKKDDDEEEYLDANDEEWYDDYA. Over residues 320–339 the composition is skewed to acidic residues; that stretch reads DDDEEEYLDANDEEWYDDYA.

Belongs to the protein kinase superfamily. Ser/Thr protein kinase family. In terms of tissue distribution, expressed in seedlings.

It carries out the reaction L-seryl-[protein] + ATP = O-phospho-L-seryl-[protein] + ADP + H(+). It catalyses the reaction L-threonyl-[protein] + ATP = O-phospho-L-threonyl-[protein] + ADP + H(+). In Arabidopsis thaliana (Mouse-ear cress), this protein is Serine/threonine-protein kinase SRK2J (SRK2J).